Here is a 266-residue protein sequence, read N- to C-terminus: Vitamin B12-binding protein (266 aa).

Residues 1-22 form the signal peptide; that stretch reads MVKQMFRALVALLLTLPVWLYA. The Fe/B12 periplasmic-binding domain occupies 25 to 266; that stretch reads RVITLSPANT…QLCNALSQVN (242 aa). Cyanocob(III)alamin is bound by residues Y50 and 242-246; that span reads DWFER. C183 and C259 are oxidised to a cystine.

It belongs to the BtuF family. The complex is composed of two ATP-binding proteins (BtuD), two transmembrane proteins (BtuC) and a solute-binding protein (BtuF).

Its subcellular location is the periplasm. Functionally, part of the ABC transporter complex BtuCDF involved in vitamin B12 import. Binds vitamin B12 and delivers it to the periplasmic surface of BtuC. This Salmonella choleraesuis (strain SC-B67) protein is Vitamin B12-binding protein.